Reading from the N-terminus, the 368-residue chain is Quinolinate synthase (368 aa).

2 residues coordinate iminosuccinate: histidine 46 and serine 63. Cysteine 110 is a [4Fe-4S] cluster binding site. Residues 141–143 (YVN) and serine 162 each bind iminosuccinate. Cysteine 230 is a binding site for [4Fe-4S] cluster. Residues 256–258 (HPE) and threonine 273 each bind iminosuccinate. Position 320 (cysteine 320) interacts with [4Fe-4S] cluster.

It belongs to the quinolinate synthase family. Type 3 subfamily. In terms of assembly, homotrimer. It depends on [4Fe-4S] cluster as a cofactor.

It localises to the cytoplasm. The enzyme catalyses iminosuccinate + dihydroxyacetone phosphate = quinolinate + phosphate + 2 H2O + H(+). It participates in cofactor biosynthesis; NAD(+) biosynthesis; quinolinate from iminoaspartate: step 1/1. Functionally, catalyzes the condensation of iminoaspartate with dihydroxyacetone phosphate to form quinolinate. This is Quinolinate synthase from Bacillus subtilis (strain 168).